We begin with the raw amino-acid sequence, 429 residues long: Serine--tRNA ligase (429 aa).

235–237 is an L-serine binding site; the sequence is TAE. 266–268 lines the ATP pocket; the sequence is RSE. Position 289 (Glu289) interacts with L-serine. An ATP-binding site is contributed by 353 to 356; sequence EISS. Ser389 serves as a coordination point for L-serine.

Belongs to the class-II aminoacyl-tRNA synthetase family. Type-1 seryl-tRNA synthetase subfamily. As to quaternary structure, homodimer. The tRNA molecule binds across the dimer.

The protein resides in the cytoplasm. It catalyses the reaction tRNA(Ser) + L-serine + ATP = L-seryl-tRNA(Ser) + AMP + diphosphate + H(+). It carries out the reaction tRNA(Sec) + L-serine + ATP = L-seryl-tRNA(Sec) + AMP + diphosphate + H(+). Its pathway is aminoacyl-tRNA biosynthesis; selenocysteinyl-tRNA(Sec) biosynthesis; L-seryl-tRNA(Sec) from L-serine and tRNA(Sec): step 1/1. Functionally, catalyzes the attachment of serine to tRNA(Ser). Is also able to aminoacylate tRNA(Sec) with serine, to form the misacylated tRNA L-seryl-tRNA(Sec), which will be further converted into selenocysteinyl-tRNA(Sec). In Actinobacillus succinogenes (strain ATCC 55618 / DSM 22257 / CCUG 43843 / 130Z), this protein is Serine--tRNA ligase.